Reading from the N-terminus, the 444-residue chain is Maintenance of mitochondrial morphology protein 1 (444 aa).

At 1-110 (MNNLDNLAGN…SFSGWSFIEG (110 aa)) the chain is on the lumenal side. The helical transmembrane segment at 111–131 (FIIGQFSVIIVLIFFIKFFVF) threads the bilayer. Topologically, residues 132-444 (SDGSSSNSSN…TDDVPLSKAE (313 aa)) are cytoplasmic. An SMP-LTD domain is found at 207–419 (PSESLDWFNV…EPRFQCIRLP (213 aa)).

Belongs to the MMM1 family. In terms of assembly, homodimer. Component of the ER-mitochondria encounter structure (ERMES) or MDM complex, composed of MMM1, MDM10, MDM12 and MDM34. An MMM1 homodimer associates with one molecule of MDM12 on each side in a pairwise head-to-tail manner, and the SMP-LTD domains of MMM1 and MDM12 generate a continuous hydrophobic tunnel for phospholipid trafficking.

It is found in the endoplasmic reticulum membrane. Its function is as follows. Component of the ERMES/MDM complex, which serves as a molecular tether to connect the endoplasmic reticulum (ER) and mitochondria. Components of this complex are involved in the control of mitochondrial shape and protein biogenesis, and function in nonvesicular lipid trafficking between the ER and mitochondria. The MDM12-MMM1 subcomplex functions in the major beta-barrel assembly pathway that is responsible for biogenesis of all outer membrane beta-barrel proteins, and acts in a late step after the SAM complex. The MDM10-MDM12-MMM1 subcomplex further acts in the TOM40-specific pathway after the action of the MDM12-MMM1 complex. Essential for establishing and maintaining the structure of mitochondria and maintenance of mtDNA nucleoids. The protein is Maintenance of mitochondrial morphology protein 1 of Vanderwaltozyma polyspora (strain ATCC 22028 / DSM 70294 / BCRC 21397 / CBS 2163 / NBRC 10782 / NRRL Y-8283 / UCD 57-17) (Kluyveromyces polysporus).